Here is a 394-residue protein sequence, read N- to C-terminus: D-mannose isomerase (394 aa).

Active-site proton donor/acceptor residues include histidine 251 and histidine 380.

This sequence belongs to the N-acylglucosamine 2-epimerase family. As to quaternary structure, monomer.

It carries out the reaction D-mannose = D-fructose. It catalyses the reaction D-lyxose = D-xylulose. Catalyzes the reversible isomerization of D-mannose to D-fructose. Can also isomerize D-lyxose, with lower efficiency. In longer reaction with a higher concentration of enzyme, it can isomerize 4-OH D-mannose derivatives (D-talose and 4-O-monosaccharyl-D-mannose). Cannot use D-glucose. The polypeptide is D-mannose isomerase (Marinomonas mediterranea (strain ATCC 700492 / JCM 21426 / NBRC 103028 / MMB-1)).